An 87-amino-acid chain; its full sequence is Cuticle protein 1 (87 aa).

Glutamine 1 is modified (pyrrolidone carboxylic acid). 3 consecutive repeat copies span residues 5–20 (YPAG…YPNC), 43–58 (YPAG…YPFC), and 71–86 (YPAG…YPYC). 3 cysteine pairs are disulfide-bonded: cysteine 14–cysteine 20, cysteine 52–cysteine 58, and cysteine 80–cysteine 86.

The polypeptide is Cuticle protein 1 (Blaberus craniifer (Death's head cockroach)).